Here is a 264-residue protein sequence, read N- to C-terminus: Thymidylate synthase (264 aa).

DUMP is bound at residue Arg21. His51 serves as a coordination point for (6R)-5,10-methylene-5,6,7,8-tetrahydrofolate. 126–127 (RR) contacts dUMP. Cys146 (nucleophile) is an active-site residue. DUMP-binding positions include 166-169 (RSCD), Asn177, and 207-209 (HLY). Asp169 is a binding site for (6R)-5,10-methylene-5,6,7,8-tetrahydrofolate. Position 263 (Ala263) interacts with (6R)-5,10-methylene-5,6,7,8-tetrahydrofolate.

This sequence belongs to the thymidylate synthase family. Bacterial-type ThyA subfamily. As to quaternary structure, homodimer.

It is found in the cytoplasm. It catalyses the reaction dUMP + (6R)-5,10-methylene-5,6,7,8-tetrahydrofolate = 7,8-dihydrofolate + dTMP. It participates in pyrimidine metabolism; dTTP biosynthesis. Its function is as follows. Catalyzes the reductive methylation of 2'-deoxyuridine-5'-monophosphate (dUMP) to 2'-deoxythymidine-5'-monophosphate (dTMP) while utilizing 5,10-methylenetetrahydrofolate (mTHF) as the methyl donor and reductant in the reaction, yielding dihydrofolate (DHF) as a by-product. This enzymatic reaction provides an intracellular de novo source of dTMP, an essential precursor for DNA biosynthesis. This chain is Thymidylate synthase, found in Pectobacterium carotovorum subsp. carotovorum (strain PC1).